The sequence spans 470 residues: Protein escargot (470 aa).

Residues 271 to 309 (LNLNTSQPGEQAAAKTGDMSPETMPNASAKKDKNQPPRY) are disordered. 4 C2H2-type zinc fingers span residues 309–331 (YQCP…QQFH), 344–366 (FSCK…IRTH), 370–392 (CKCN…IRTH), and 398–420 (FSCQ…LQTH). The C2H2-type 5; atypical zinc finger occupies 426–449 (YSCTSCSKTFSRMSLLTKHSEGGC). Residues 448 to 470 (GCPGGSAGSSSSSELNYAGYAEP) are disordered.

The protein belongs to the snail C2H2-type zinc-finger protein family. In terms of tissue distribution, expression is complex and dynamic. In early embryogenesis, expression begins on the dorsal side of the embryo. Expressed in a pattern of longitudinal stripes early in germband elongation. Later in embryogenesis, expression is in cells that correspond to the wing, haltere, leg and genital imaginal disks and the abdominal histoblasts. In the embryonic leg disk, expression is restricted to imaginal cells. Also expressed in the central nervous system (CNS), tracheae and head of stage 14 embryos. CNS and tracheal expression decays during later stages, though head expression persists until late in embryogenesis. In third instar larvae, expression is seen in the brain and in regions of many imaginal tissues including the eye-antennal, wing, leg and haltere disks. Expressed in embryonic, larval and adult male germline stem cells and in the somatic cells of the embryonic gonads.

Its subcellular location is the nucleus. Functionally, transcription factor that can both stimulate and repress transcription. Binds to the consensus DNA sequence 5'-A/GCAGGTG-3'. Regulates cell motility and adhesion during tracheal morphogenesis by stimulating transcription of the DE-cadherin gene shg at branch tips, thereby promoting tracheal tube fusion. Maintains diploidy in imaginal cells by inhibiting the transcription of genes required for endoreplication. Required for development of the genital disk and acts as an intrinsic determinant of wing cell fate. The somatic protein is required for maintenance of male germ cells. Acts with other members of the snail protein family to control embryonic central nervous system development. The chain is Protein escargot (esg) from Drosophila melanogaster (Fruit fly).